A 246-amino-acid polypeptide reads, in one-letter code: Envelope glycoprotein gp95 (246 aa).

The Extracellular segment spans residues 1 to 192; it reads IPSRPVGGPC…EWAVHLLKGL (192 aa). Residue N31 is glycosylated (N-linked (GlcNAc...) asparagine; by host). A disulfide bridge connects residues C50 and C86. The fusion peptide stretch occupies residues 58–78; the sequence is GPTARIFASILAPGVAAAQAL. Positions 75–125 form a coiled coil; that stretch reads AQALREIERLACWSVKQANLTTSLLGDLLDDVTSIRHAVLQNRAAIDFLLL. An N-linked (GlcNAc...) asparagine; by host glycan is attached at N93. Residues 114–130 form an immunosuppression region; that stretch reads LQNRAAIDFLLLAHGHG. C131 and C138 form a disulfide bridge. An N-linked (GlcNAc...) asparagine; by host glycan is attached at N141. The stretch at 143 to 173 forms a coiled coil; it reads SDQSESIQKKFQLMKEHVNKIGVDSDLIGSW. Residues 193 to 213 form a helical membrane-spanning segment; it reads LLGLVVILLLVVCLPCLLQML. Residues C205 and C208 are each lipidated (S-palmitoyl cysteine; by host). The Cytoplasmic segment spans residues 214 to 246; sequence CGNRRKMINNSISYHTEYKKLQKACGQPESRIV.

It belongs to the Alpharetroviruses envelope glycoprotein family. As to quaternary structure, heterodimer with the transmembrane protein. The mature envelope protein (Env) consists of a trimer of SU-TM heterodimers attached by a labile interchain disulfide bond. Interacts with the host cell entry receptor TVA isoforms pg900 and pg800; this interaction allows the viral attachment. Heterodimer with the surface protein. The mature envelope protein (Env) consists of a trimer of SU-TM heterodimers attached by a labile interchain disulfide bond. Specific enzymatic cleavages in vivo yield mature proteins. Envelope glycoproteins are synthesized as an inactive precursor that is N-glycosylated and processed likely by host cell furin or by a furin-like protease in the Golgi to yield the mature SU and TM proteins. The cleavage site between SU and TM requires the minimal sequence [KR]-X-[KR]-R. In terms of processing, the transmembrane protein is palmitoylated. Palmitoylation is necessary for glycoprotein function and infectivity.

It is found in the virion membrane. The protein resides in the host cell membrane. In terms of biological role, the surface protein (SU) attaches the virus to the host cell entry receptor TVA. This interaction triggers the refolding of the transmembrane protein (TM) thereby unmasking its fusion peptide and the formation of a reactive thiolate to activate its fusogenic potential. Fusion occurs at the host cell plasma membrane. Its function is as follows. The transmembrane protein (TM) acts as a class I viral fusion protein. Under the current model, the protein has at least 3 conformational states: pre-fusion native state, pre-hairpin intermediate state, and post-fusion hairpin state. During viral and target cell membrane fusion, the coiled coil regions (heptad repeats) assume a trimer-of-hairpins structure, positioning the fusion peptide in close proximity to the C-terminal region of the ectodomain. The formation of this structure appears to drive apposition and subsequent fusion of viral and target cell membranes. Membranes fusion leads to delivery of the nucleocapsid into the cytoplasm. This Rous sarcoma virus subgroup A (strain Schmidt-Ruppin) (RSV-SR-A) protein is Envelope glycoprotein gp95 (env).